A 413-amino-acid polypeptide reads, in one-letter code: Serine hydroxymethyltransferase (413 aa).

(6S)-5,6,7,8-tetrahydrofolate is bound by residues Leu-117 and 121 to 123 (GHL). The residue at position 226 (Lys-226) is an N6-(pyridoxal phosphate)lysine. Residue 349 to 351 (SPF) participates in (6S)-5,6,7,8-tetrahydrofolate binding.

This sequence belongs to the SHMT family. As to quaternary structure, homodimer. It depends on pyridoxal 5'-phosphate as a cofactor.

It localises to the cytoplasm. It catalyses the reaction (6R)-5,10-methylene-5,6,7,8-tetrahydrofolate + glycine + H2O = (6S)-5,6,7,8-tetrahydrofolate + L-serine. It functions in the pathway one-carbon metabolism; tetrahydrofolate interconversion. Its pathway is amino-acid biosynthesis; glycine biosynthesis; glycine from L-serine: step 1/1. Catalyzes the reversible interconversion of serine and glycine with tetrahydrofolate (THF) serving as the one-carbon carrier. This reaction serves as the major source of one-carbon groups required for the biosynthesis of purines, thymidylate, methionine, and other important biomolecules. Also exhibits THF-independent aldolase activity toward beta-hydroxyamino acids, producing glycine and aldehydes, via a retro-aldol mechanism. This chain is Serine hydroxymethyltransferase, found in Listeria monocytogenes serotype 4b (strain F2365).